Consider the following 607-residue polypeptide: UvrABC system protein C (607 aa).

Residues 29-106 (DKPGVYLMKD…IKKHNPKYNI (78 aa)) form the GIY-YIG domain. The 36-residue stretch at 211-246 (GAILKALEKKMKEASENLEFERAKEYRDLMEDLKKV) folds into the UVR domain.

This sequence belongs to the UvrC family. In terms of assembly, interacts with UvrB in an incision complex.

The protein localises to the cytoplasm. In terms of biological role, the UvrABC repair system catalyzes the recognition and processing of DNA lesions. UvrC both incises the 5' and 3' sides of the lesion. The N-terminal half is responsible for the 3' incision and the C-terminal half is responsible for the 5' incision. This is UvrABC system protein C from Desulfitobacterium hafniense (strain Y51).